The chain runs to 448 residues: MSTAKDPGNGVYEILSLIFDFPSNEQRLWWHSTAPMFAAMLDNAGYNIHDQYRHLGIFKKHIIPFLGVYPTKDKERWLSILTRCGLPLELSLNCTDSVVRYTYEPINEVTGTEKDTFNTLAIMTSVQKLAQIQAGIDLEWFSYFKDELTLDESESATLQSNELVKEQIKTQNKLALDLKESQFALKVYFYPHLKSIATGKSTHDLIFDSVLKLSQKHDSIQPAFQVLCDYVSRRNHSAEVDQHGALHARLLSCDLIDPAKSRVKIYLLEKTVSLSVMEDLWTLGGQRVDASTMDGLDMLRELWSLLKVPTGHLEYPKGYLELGEIPNEQLPSMANYTLHHNDPMPEPQVYFTVFGMNDAEISNALTIFFQRHGFDDMAKNYRVFLQDSYPYHDFESLNYLHAYISFSYRRNKPYLSVYLHTFETGRWPVFADSPISFDAYRRCELSTK.

Residues isoleucine 80–leucine 81 and glutamate 89 each bind L-tryptophan. 3 residues coordinate substrate: arginine 100, lysine 186, and tyrosine 188. Residues tyrosine 190 and arginine 249 each coordinate L-tryptophan. Substrate is bound by residues arginine 262, lysine 264, tyrosine 266, glutamine 348, tyrosine 350, tyrosine 414, and tyrosine 418.

The protein belongs to the tryptophan dimethylallyltransferase family. As to quaternary structure, homodimer.

It carries out the reaction L-tryptophan + dimethylallyl diphosphate = 4-(3-methylbut-2-enyl)-L-tryptophan + diphosphate. It functions in the pathway alkaloid biosynthesis; ergot alkaloid biosynthesis. Functionally, tryptophan dimethylallyltransferase; part of the gene cluster that mediates the biosynthesis of fungal ergot alkaloid. DmaW catalyzes the first step of ergot alkaloid biosynthesis by condensing dimethylallyl diphosphate (DMAP) and tryptophan to form 4-dimethylallyl-L-tryptophan. The second step is catalyzed by the methyltransferase easF that methylates 4-dimethylallyl-L-tryptophan in the presence of S-adenosyl-L-methionine, resulting in the formation of 4-dimethylallyl-L-abrine. The catalase easC and the FAD-dependent oxidoreductase easE then transform 4-dimethylallyl-L-abrine to chanoclavine-I which is further oxidized by easD in the presence of NAD(+), resulting in the formation of chanoclavine-I aldehyde. Agroclavine dehydrogenase easG then mediates the conversion of chanoclavine-I aldehyde to agroclavine via a non-enzymatic adduct reaction: the substrate is an iminium intermediate that is formed spontaneously from chanoclavine-I aldehyde in the presence of glutathione. The presence of easA is not required to complete this reaction. Further conversion of agroclavine to paspalic acid is a two-step process involving oxidation of agroclavine to elymoclavine and of elymoclavine to paspalic acid, the second step being performed by the elymoclavine oxidase cloA. Paspalic acid is then further converted to D-lysergic acid. Ergopeptines are assembled from D-lysergic acid and three different amino acids by the D-lysergyl-peptide-synthetases composed each of a monomudular and a trimodular nonribosomal peptide synthetase subunit. LpsB and lpsC encode the monomodular subunits responsible for D-lysergic acid activation and incorporation into the ergopeptine backbone. LpsA1 and A2 subunits encode the trimodular nonribosomal peptide synthetase assembling the tripeptide portion of ergopeptines. LpsA1 is responsible for formation of the major ergopeptine, ergotamine, and lpsA2 for alpha-ergocryptine, the minor ergopeptine of the total alkaloid mixture elaborated by C.purpurea. D-lysergyl-tripeptides are assembled by the nonribosomal peptide synthetases and released as N-(D-lysergyl-aminoacyl)-lactams. Cyclolization of the D-lysergyl-tripeptides is performed by the Fe(2+)/2-ketoglutarate-dependent dioxygenase easH which introduces a hydroxyl group into N-(D-lysergyl-aminoacyl)-lactam at alpha-C of the aminoacyl residue followed by spontaneous condensation with the terminal lactam carbonyl group. The sequence is that of Tryptophan dimethylallyltransferase 1 from Claviceps purpurea (Ergot fungus).